A 335-amino-acid polypeptide reads, in one-letter code: Transcriptional adapter 1 (335 aa).

A disordered region spans residues 83–103 (LPWPGGSAAKPGKPKGKKKLS). Residues 84–93 (PWPGGSAAKP) show a composition bias toward low complexity. Residues 94–103 (GKPKGKKKLS) are compositionally biased toward basic residues.

The protein belongs to the TADA1 family. Component of the STAGA transcription coactivator-HAT complex, at least composed of SUPT3H, GCN5L2, TAF5L, TAF6L, SUPT7L, TADA3L, TAD1L, TAF10, TAF12, TRRAP and TAF9.

The protein resides in the nucleus. Functionally, probably involved in transcriptional regulation. This chain is Transcriptional adapter 1 (TADA1), found in Homo sapiens (Human).